The chain runs to 456 residues: UDP-N-acetylmuramoylalanine--D-glutamate ligase (456 aa).

119 to 125 (GSNGKTT) is an ATP binding site.

The protein belongs to the MurCDEF family.

It is found in the cytoplasm. The catalysed reaction is UDP-N-acetyl-alpha-D-muramoyl-L-alanine + D-glutamate + ATP = UDP-N-acetyl-alpha-D-muramoyl-L-alanyl-D-glutamate + ADP + phosphate + H(+). The protein operates within cell wall biogenesis; peptidoglycan biosynthesis. In terms of biological role, cell wall formation. Catalyzes the addition of glutamate to the nucleotide precursor UDP-N-acetylmuramoyl-L-alanine (UMA). The polypeptide is UDP-N-acetylmuramoylalanine--D-glutamate ligase (Limosilactobacillus reuteri (strain DSM 20016) (Lactobacillus reuteri)).